The sequence spans 452 residues: MSFPKGFLWGAATASYQIEGAWNEDGKGESIWDRFTHQKGNILYGHNGDVACDHYHRHEEDVSLMKELGIKAYRFSTAWARIFPDGFGNINQKGLEFYDKLINELVENGIEPVVTLYHWDLPQKLQDIGGWANPEIVNYYFEYAMLIINRYKDKVKKWITFNEPYCIAFLGHWHGIHAPGIKNFKVAMDVVHNIMLSHFKVVKAVKENNIDVEIGITLNLTPVYLQTERLGYKVSEIEREMVNLSSQLDNELFLDPVLKGSYPQKLLDYLVQKDLLDSQKVNNMQQEVKENFIFPDFLGINYYTRSVRLYDENSGWIFPIRWEHPAGEYTEMGWEVFPQGLFDLLIWIKESYPQIPIYITENGAAYNDKVEDGRVHDQKRVEYLKQHFEAARKAIKNGVDLRGYFVWSLIDNFEWAMGYTKRFGIIYVDYETQKRIKKDSFYFYQQYIKENS.

Glutamine 17, histidine 118, and asparagine 162 together coordinate substrate. The Proton donor role is filled by glutamate 163. Tyrosine 303 is a substrate binding site. Glutamate 361 acts as the Nucleophile in catalysis. Substrate-binding positions include tryptophan 407 and 414–415 (EW).

It belongs to the glycosyl hydrolase 1 family. In terms of assembly, monomer. Homotrimer.

The catalysed reaction is Hydrolysis of terminal, non-reducing beta-D-glucosyl residues with release of beta-D-glucose.. The enzyme catalyses Hydrolysis of terminal non-reducing beta-D-galactose residues in beta-D-galactosides.. It catalyses the reaction Hydrolysis of (1-&gt;4)-beta-D-xylans, to remove successive D-xylose residues from the non-reducing termini.. It carries out the reaction Hydrolysis of (1-&gt;4)-linkages in (1-&gt;4)-beta-D-glucans, to remove successive glucose units.. The catalysed reaction is Hydrolysis of (1-&gt;4)-beta-D-glucosidic linkages in cellulose and cellotetraose, releasing cellobiose from the non-reducing ends of the chains.. It functions in the pathway glycan metabolism; beta-D-glucan degradation. It participates in glycan metabolism; cellulose degradation. With respect to regulation, slight activation by Mn(2+), Ni(2+) and K(+). Slight inhibition by Fe(3+), Zn(2+), Co(2+), Mg(2+), Cu(2+), Na(+) and NH4(+). Has high beta-D-glucosidase, exoglucanase, beta-D-xylosidase, beta-D-galactosidase, and transgalactosylation activities in vitro. Has a very broad substrate specificity with the highest activity with p-nitrophenyl beta-D-galactopyranoside (pNPGal) as substrate. Active with pNP-beta-D-glucopyranoside (pNPGlu), pNP-beta-D-cellobioside (pNPC), lactose, pNP-beta-D-xylopyranoside (pNPX) and cellobiose in the order of decreasing activity, respectively. Very low activity with soluble polysaccharides synanthrin and locust bean gum. Very low, but detectable activity with insoluble substrates such as cotton and filter paper. No activity with pNP-alpha-L-arabinofuranoside (pNPAr) or carboxymethylcellulose (CMC) as substrates. Synthesizes galactooligosaccharides (GalOS) from lactose. Hydrolyzes pretreated corn stover releasing both glucose and xylose. This multifunctional enzyme may provide C.owensensis the benefit of utilizing a wide variety of available carbon sources in its natural growing environment as the ability to convert a wide range of soluble oligosaccharides to monoses is required in order to assimilate them. The protein is Multifunctional glycoside hydrolase of Caldicellulosiruptor owensensis (strain ATCC 700167 / DSM 13100 / OL).